The primary structure comprises 301 residues: MEQLVNELIEADVGRVLVNEPLARYTTMKIGGPADILIVPKHVAGIEKTLQLVKQYKTKWTVIGRGSNLLVSDQGIEGVVIRLGEGLDHLEVEKHKVRVGSGYPLIKLSTLLSRQGLAGLEFASGIPGSVGGAVYMNAGAHKSDISSVLSKALILFEDGAIDWLTNKELEFSYRASVLQTKRPGIVLEAVFQLQAGKREEIVRSMQNNKDYRRETQPWNHPCAGSVFRNPIPHFAGDLVEKAGLRGYRIGGAQISEMHGNFIVNTGGASAQDVLSLIELIKHTIKDKFDVDMHTEVEIIGR.

The region spanning 29-196 (KIGGPADILI…LEAVFQLQAG (168 aa)) is the FAD-binding PCMH-type domain. Arg-174 is an active-site residue. The active-site Proton donor is Ser-225. The active site involves Glu-295.

The protein belongs to the MurB family. It depends on FAD as a cofactor.

It is found in the cytoplasm. The catalysed reaction is UDP-N-acetyl-alpha-D-muramate + NADP(+) = UDP-N-acetyl-3-O-(1-carboxyvinyl)-alpha-D-glucosamine + NADPH + H(+). The protein operates within cell wall biogenesis; peptidoglycan biosynthesis. Cell wall formation. In Bacillus cereus (strain ATCC 14579 / DSM 31 / CCUG 7414 / JCM 2152 / NBRC 15305 / NCIMB 9373 / NCTC 2599 / NRRL B-3711), this protein is UDP-N-acetylenolpyruvoylglucosamine reductase 1 (murB1).